Reading from the N-terminus, the 196-residue chain is Nucleoid occlusion factor SlmA (196 aa).

In terms of domain architecture, HTH tetR-type spans 7–68 (SNRREEILQA…GLIEFIEEAL (62 aa)). The H-T-H motif DNA-binding region spans 31 to 50 (TTAKLAQQVGVSEAALYRHF). A coiled-coil region spans residues 65-142 (EEALMSRINR…QLRQILRERK (78 aa)).

The protein belongs to the nucleoid occlusion factor SlmA family. In terms of assembly, homodimer. Interacts with FtsZ.

It localises to the cytoplasm. The protein localises to the nucleoid. In terms of biological role, required for nucleoid occlusion (NO) phenomenon, which prevents Z-ring formation and cell division over the nucleoid. Acts as a DNA-associated cell division inhibitor that binds simultaneously chromosomal DNA and FtsZ, and disrupts the assembly of FtsZ polymers. SlmA-DNA-binding sequences (SBS) are dispersed on non-Ter regions of the chromosome, preventing FtsZ polymerization at these regions. This Vibrio vulnificus (strain CMCP6) protein is Nucleoid occlusion factor SlmA.